The following is a 260-amino-acid chain: DNA-binding protein RFXANK (260 aa).

The segment at 1 to 79 is disordered; the sequence is MELTQPAEDL…STTLTNRQRG (79 aa). Over residues 22–33 the composition is skewed to acidic residues; sequence GDPEDPGEEAAD. Over residues 57–77 the composition is skewed to polar residues; that stretch reads SVSSPQAGSSLKHSTTLTNRQ. 5 ANK repeats span residues 89 to 118, 123 to 152, 156 to 185, 189 to 218, and 222 to 251; these read LDSLSIHQLAAQGELDQLKEHLRKGDNLVN, RGFTPLIWASAFGEIETVRFLLEWGADPHI, ERESALSLASTGGYTDIVGLLLERDVDINI, NGGTPLLYAVRGNHVKCVEALLARGADLTT, and SGYTPMDLAVALGYRKVQQVIENHILKLFQ.

As to quaternary structure, forms homodimers. The RFX heterotetrameric complex consists of 2 molecules of RFX5 and one each of RFXAP and RFX-B/RFXANK; with each subunit representing a separate complementation group. Interacts (via ankyrin repeats) with RFX5 (via PxLPxI/L motif); the interaction is direct. RFX forms cooperative DNA binding complexes with X2BP and CBF/NF-Y. RFX associates with CIITA to form an active transcriptional complex. Interacts with RAF1. Interacts (via ankyrin repeats) with RFX7 (via PxLPxI/L motif). Phosphorylated by RAF1. As to expression, ubiquitous.

The protein localises to the cytoplasm. It localises to the nucleus. In terms of biological role, activates transcription from class II MHC promoters. Activation requires the activity of the MHC class II transactivator/CIITA. May regulate other genes in the cell. RFX binds the X1 box of MHC-II promoters. May also potentiate the activation of RAF1. Its function is as follows. Isoform 2 is not involved in the positive regulation of MHC class II genes. This is DNA-binding protein RFXANK (RFXANK) from Homo sapiens (Human).